Consider the following 156-residue polypeptide: Small ribosomal subunit protein uS7 (156 aa).

The protein belongs to the universal ribosomal protein uS7 family. In terms of assembly, part of the 30S ribosomal subunit. Contacts proteins S9 and S11.

Its function is as follows. One of the primary rRNA binding proteins, it binds directly to 16S rRNA where it nucleates assembly of the head domain of the 30S subunit. Is located at the subunit interface close to the decoding center, probably blocks exit of the E-site tRNA. The chain is Small ribosomal subunit protein uS7 from Cutibacterium acnes (strain DSM 16379 / KPA171202) (Propionibacterium acnes).